Here is a 157-residue protein sequence, read N- to C-terminus: Endoribonuclease YbeY (157 aa).

Zn(2+) contacts are provided by His114, His118, and His124.

This sequence belongs to the endoribonuclease YbeY family. It depends on Zn(2+) as a cofactor.

It localises to the cytoplasm. In terms of biological role, single strand-specific metallo-endoribonuclease involved in late-stage 70S ribosome quality control and in maturation of the 3' terminus of the 16S rRNA. The protein is Endoribonuclease YbeY of Salmonella typhimurium (strain LT2 / SGSC1412 / ATCC 700720).